Reading from the N-terminus, the 973-residue chain is UvrABC system protein A (973 aa).

Gly-34–Ser-41 serves as a coordination point for ATP. 2 ABC transporter domains span residues Trp-331–Leu-609 and Pro-629–Lys-958. Residue Gly-662 to Ser-669 coordinates ATP. A C4-type zinc finger spans residues Cys-761–Cys-787.

Belongs to the ABC transporter superfamily. UvrA family. Forms a heterotetramer with UvrB during the search for lesions.

The protein resides in the cytoplasm. In terms of biological role, the UvrABC repair system catalyzes the recognition and processing of DNA lesions. UvrA is an ATPase and a DNA-binding protein. A damage recognition complex composed of 2 UvrA and 2 UvrB subunits scans DNA for abnormalities. When the presence of a lesion has been verified by UvrB, the UvrA molecules dissociate. In Rhizobium meliloti (strain 1021) (Ensifer meliloti), this protein is UvrABC system protein A.